The chain runs to 316 residues: UPF0613 protein PB24D3.06c (316 aa).

This sequence belongs to the UPF0613 family.

Its subcellular location is the cytoplasm. The protein localises to the nucleus. This chain is UPF0613 protein PB24D3.06c, found in Schizosaccharomyces pombe (strain 972 / ATCC 24843) (Fission yeast).